A 1165-amino-acid polypeptide reads, in one-letter code: Activity-dependent neuroprotector homeobox protein 2 (1165 aa).

Residues 73–96 (YCCSLCRYSTKVLTSLKNHLHRYH) form a C2H2-type 1 zinc finger. The C2H2-type 2; degenerate zinc finger occupies 106–128 (IPCPNCPFSSQPRVVGKHFRMFH). A Glycyl lysine isopeptide (Lys-Gly) (interchain with G-Cter in SUMO2) cross-link involves residue Lys146. Residues 155–178 (FTCLKCNFSNTLYYSMKKHVLVAH) form a C2H2-type 3; degenerate zinc finger. The C2H2-type 4 zinc finger occupies 215–240 (YYCKKCSAIASSQDALMYHILTSDAH). Over residues 303 to 318 (SGTVQSVTVTPGTSGS) the composition is skewed to low complexity. The disordered stretch occupies residues 303–327 (SGTVQSVTVTPGTSGSLTHSPPTTA). A C2H2-type 5; degenerate zinc finger spans residues 696 to 718 (KTCPVCNELFPSNVYQVHMEVAH). The C2H2-type 6; degenerate zinc-finger motif lies at 724 to 746 (QLCQVCNELFPANVYQVHMEVAH). The C2H2-type 7; degenerate zinc finger occupies 777–798 (VRCLSCKCLVSQEELMHHLLMH). 2 C2H2-type zinc fingers span residues 800-823 (LGCL…RTKH) and 905-935 (LTCP…PTVH). Residues 1005–1068 (PVKRKLPEGH…SGPSEDSLQA (64 aa)) are disordered. Residues Lys1009 and Lys1048 each participate in a glycyl lysine isopeptide (Lys-Gly) (interchain with G-Cter in SUMO2) cross-link. The span at 1009–1024 (KLPEGHLGPEDQRDGE) shows a compositional bias: basic and acidic residues. Positions 1090 to 1132 (DYFHRRPYPSRKEVELLSSLLWVWKIDVASFFGKRRYICMKAI) form a DNA-binding region, homeobox.

It belongs to the krueppel C2H2-type zinc-finger protein family. May interact with SMARCA4/BRG1. As to expression, expressed widely, with the highest level in the brain.

The protein resides in the nucleus. In terms of biological role, may be involved in transcriptional regulation. May play a role in neuronal function; perhaps involved in protection of brain tissues from oxidative stress. May be involved in erythroid differentiation. In Mus musculus (Mouse), this protein is Activity-dependent neuroprotector homeobox protein 2 (Adnp2).